We begin with the raw amino-acid sequence, 291 residues long: Protease HtpX homolog (291 aa).

2 consecutive transmembrane segments (helical) span residues 4 to 24 (ILLF…VASL) and 39 to 59 (SALL…SLLI). A Zn(2+)-binding site is contributed by histidine 144. Glutamate 145 is an active-site residue. Histidine 148 is a Zn(2+) binding site. The next 2 membrane-spanning stretches (helical) occupy residues 159–179 (LIQG…GYAV) and 199–219 (VSTI…VAWF). Glutamate 224 is a binding site for Zn(2+).

This sequence belongs to the peptidase M48B family. Requires Zn(2+) as cofactor.

It localises to the cell inner membrane. This Polaromonas naphthalenivorans (strain CJ2) protein is Protease HtpX homolog.